A 248-amino-acid chain; its full sequence is Probable transcriptional regulatory protein FTN_1028 (248 aa).

The protein belongs to the TACO1 family.

It localises to the cytoplasm. In Francisella tularensis subsp. novicida (strain U112), this protein is Probable transcriptional regulatory protein FTN_1028.